The following is a 415-amino-acid chain: MFNRNLTLDQVDPDVWAAIQKEDVRQEQHIELIASENYASPAVMQAQGTQLTNKYAEGYPGKRYYGGCEYVDVVEQLAIDRLKQIFGAEAANVQPNSGSQANQGVYMAVLKPGDTVLGMSLAEGGHLTHGASVNASGKLYNFVPYGLDADEVLDYAQVERLTKEHKPKLIVAGASAYALHIDFERMARIAHDNGALFMVDIAHYAGLVAGGAYPNPVPHADFVTSTTHKSLRGPRGGVIMMKAEFEKAVNSAIFPGIQGGPLMHVIAAKAVAFKEALSPEFQDYAQQVVKNAKVLADTLVKRGLRIVSGRTESHVMLVDLRPKGITGKEAEAVLGQAHITVNKNAIPNDPEKPFVTSGIRLGTPAMTTRGFKEAEAELTANLIADVLDNPRDEANIAAVRARVNELTARLPVYGN.

(6S)-5,6,7,8-tetrahydrofolate is bound by residues leucine 121 and 125–127 (GHL). Lysine 229 carries the post-translational modification N6-(pyridoxal phosphate)lysine.

Belongs to the SHMT family. In terms of assembly, homodimer. Requires pyridoxal 5'-phosphate as cofactor.

It is found in the cytoplasm. The enzyme catalyses (6R)-5,10-methylene-5,6,7,8-tetrahydrofolate + glycine + H2O = (6S)-5,6,7,8-tetrahydrofolate + L-serine. It participates in one-carbon metabolism; tetrahydrofolate interconversion. It functions in the pathway amino-acid biosynthesis; glycine biosynthesis; glycine from L-serine: step 1/1. Catalyzes the reversible interconversion of serine and glycine with tetrahydrofolate (THF) serving as the one-carbon carrier. This reaction serves as the major source of one-carbon groups required for the biosynthesis of purines, thymidylate, methionine, and other important biomolecules. Also exhibits THF-independent aldolase activity toward beta-hydroxyamino acids, producing glycine and aldehydes, via a retro-aldol mechanism. This is Serine hydroxymethyltransferase 2 from Bordetella bronchiseptica (strain ATCC BAA-588 / NCTC 13252 / RB50) (Alcaligenes bronchisepticus).